Reading from the N-terminus, the 21-residue chain is Pseudogermin (21 aa).

It belongs to the germin family. In terms of assembly, homotetramer.

The protein resides in the secreted. Its subcellular location is the extracellular space. It localises to the apoplast. It is found in the cell wall. Its function is as follows. May subsume the role of germin at the low water potentials during embryogenesis. The sequence is that of Pseudogermin from Triticum aestivum (Wheat).